A 578-amino-acid polypeptide reads, in one-letter code: Oxygen sensor histidine kinase response regulator DevS/DosS (578 aa).

2 consecutive GAF domains span residues aspartate 63–valine 200 and glutamate 231–tryptophan 369. Histidine 149 is a heme binding site. Positions valine 383–glutamine 578 constitute a Histidine kinase domain. Position 395 is a phosphohistidine; by autocatalysis (histidine 395).

Requires Mg(2+) as cofactor. The cofactor is heme.

Its subcellular location is the cytoplasm. It carries out the reaction ATP + protein L-histidine = ADP + protein N-phospho-L-histidine.. Member of the two-component regulatory system DevR/DevS (DosR/DosS) involved in onset of the dormancy response. Regulates an approximately 48-member regulon. Required for full induction of the DevR (DosR) regulon; acts later than DosT to positively regulate expression of the DevR regulon during adaptation to anaerobiosis. Characterized as an oxygen sensor; O(2) acts as a switch, with O(2)-bound Fe(2+) protein inactive in autophosphorylation. Has also been suggested to act as a redox sensor, or perhaps as a dual oxygen/redox sensor. Donates a phosphate group to transcriptional regulator DevR (DosR). This Mycobacterium tuberculosis (strain CDC 1551 / Oshkosh) protein is Oxygen sensor histidine kinase response regulator DevS/DosS (devS).